The primary structure comprises 1052 residues: MAAQEWDWFQREELIGQISDIRVQNLQVERENVQKRTFTRWINLHLEKCDPPLEVTDLFVDIQDGKILMALLEVLSGRNLLHEYKSSSHRIFRLNNIAKALKFLEDSNVKLVSIDAAEIADGNPSLVLGLIWNIILFFQIKELTGNLSRSSPSSSLSPGSGGTDSDSSYPPTPTTERSVAVAVKDQRKAIKTLLSWVQRKTRKYGVAVQDFAGSWRSGLAFLAVIKAIDPSLVDMKQALEDSTRDNLEKAFSIAHDSLHIPRLLEPEDIMVDMPDEQSIVTYVAQFLERFPELEPEDFVNPDKEAPIESTFVRIKESPSEQGSRVLLLSENGERAYTVNQETSYPPPDKVFVCDQLESPTGFCLDSAPSHKLSDSSTEFMHEIIDQVLQGSTGKTGSIAEPTPESSILSTRKDGRRSNSLPVKKTVHFEADLHKDASCSKDPFYSSDFRFEGSPKATKELSKQDGHVSLAEVSKEKKKSEQEARLVLEAASDKVPESTVDGLDAVPQDAQPSQDSSFCNGTVESPSSQGEKGPPPSSPGDHTLLANSTELKVQLLTVEPMDKEDYFECIPLKASKFNRDLVDFASTSQAFGEDPSSHEKTRGEEEGSENHAEKPGKRKSKSPRAETEAAESRLEPKKLEPPPKDPEQEDQGHALPPETPADKKPKVYEKAKRKSTRHHSEEEGEAESGFSAVCEEEIPSAPPSTSVSLETLRSHSEEGLDFKPSPPLSKISVIPHDLFYYPHYEVPLAAVLEAYAEGGEDLKSEDTDLEHPEDSYLQDSREEEADEDEEEAQSSQSSCSFSLPVDNSYPSVSEHVSHVDGSSEGPTSALGPGSPPSHEDHQPKETKENGPVESQQSQEPPNPELPTKPLEEKLTEASTSSKKKEKRKHMDHVESSLFIAPGTVRSSDDLEENSSEHKVPSRNSHSDSSIYIRRHTNRSLELDHFSYVQLRNAADLDDRRNRVLNRYNSQKLTELILQFYGIRADMKREYKHARLSMTGTNSSGEAVPLGNQSPPNDSLTQFVQQPDVIYFILFLWLLVYCLLLFPQLDVSRL.

Positions 1-288 are actin-binding; sequence MAAQEWDWFQ…IVTYVAQFLE (288 aa). In terms of domain architecture, Calponin-homology (CH) 1 spans 32-139; it reads NVQKRTFTRW…LIWNIILFFQ (108 aa). The segment covering 148–168 has biased composition (low complexity); it reads SRSSPSSSLSPGSGGTDSDSS. Residues 148–178 are disordered; sequence SRSSPSSSLSPGSGGTDSDSSYPPTPTTERS. Residues 187-291 form the Calponin-homology (CH) 2 domain; that stretch reads RKAIKTLLSW…YVAQFLERFP (105 aa). Disordered regions lie at residues 391–420, 455–545, 585–727, and 758–929; these read STGK…SNSL, KATK…TLLA, STSQ…SPPL, and GEDL…DSSI. Composition is skewed to basic and acidic residues over residues 455-465 and 472-495; these read KATKELSKQDG and VSKE…DKVP. The span at 509 to 529 shows a compositional bias: polar residues; the sequence is AQPSQDSSFCNGTVESPSSQG. Ser-537 is subject to Phosphoserine. 3 stretches are compositionally biased toward basic and acidic residues: residues 594–614, 622–651, and 659–669; these read PSSH…AEKP, PRAE…EDQG, and PADKKPKVYEK. Ser-679 carries the phosphoserine modification. Residue Thr-710 is modified to Phosphothreonine. Over residues 711–720 the composition is skewed to basic and acidic residues; that stretch reads LRSHSEEGLD. Ser-724 is subject to Phosphoserine. Over residues 759 to 773 the composition is skewed to basic and acidic residues; sequence EDLKSEDTDLEHPED. Positions 780 to 791 are enriched in acidic residues; it reads REEEADEDEEEA. Residues 792–801 show a composition bias toward low complexity; the sequence is QSSQSSCSFS. Over residues 836 to 849 the composition is skewed to basic and acidic residues; the sequence is SHEDHQPKETKENG. Ser-856 is subject to Phosphoserine. The span at 880 to 889 shows a compositional bias: basic residues; it reads SKKKEKRKHM. Ser-925 is subject to Phosphoserine. Residues 1027-1047 traverse the membrane as a helical; Anchor for type IV membrane protein segment; the sequence is VIYFILFLWLLVYCLLLFPQL.

As to expression, expressed in testis. Expressed during testis maturation process and in maturing spermatids. In brain, it is expressed in neurons of the hippocampus, cerebral cortex, and thalamus, Purkinje cells, and also in the choroid plexus and ependymal cells. Expressed predominantly in dendrites and cell bodies of the neurons, but not in axons. The level of expression increases during the period of maturation of the mouse brain after birth.

The protein localises to the membrane. Its subcellular location is the cytoplasm. The protein is Calmin (Clmn) of Mus musculus (Mouse).